The following is a 212-amino-acid chain: Cytidylate kinase (212 aa).

Residue 9–17 (GPAAAGKGT) coordinates ATP.

This sequence belongs to the cytidylate kinase family. Type 1 subfamily.

The protein localises to the cytoplasm. It carries out the reaction CMP + ATP = CDP + ADP. The enzyme catalyses dCMP + ATP = dCDP + ADP. The polypeptide is Cytidylate kinase (Rhizobium meliloti (strain 1021) (Ensifer meliloti)).